Reading from the N-terminus, the 270-residue chain is tRNA pseudouridine synthase A (270 aa).

Aspartate 60 acts as the Nucleophile in catalysis. The interval 107 to 111 (FHARF) is RNA binding. Tyrosine 118 provides a ligand contact to substrate. Residues 168–172 (QCQSR) are interaction with tRNA.

This sequence belongs to the tRNA pseudouridine synthase TruA family. Homodimer.

It catalyses the reaction uridine(38/39/40) in tRNA = pseudouridine(38/39/40) in tRNA. Formation of pseudouridine at positions 38, 39 and 40 in the anticodon stem and loop of transfer RNAs. This chain is tRNA pseudouridine synthase A, found in Shigella boydii serotype 4 (strain Sb227).